The following is a 663-amino-acid chain: DNA ligase (663 aa).

Residues 31-35 (DYEYD), 80-81 (SL), and Glu109 contribute to the NAD(+) site. Catalysis depends on Lys111, which acts as the N6-AMP-lysine intermediate. NAD(+) contacts are provided by Arg132, Glu167, Lys283, and Lys307. Residues Cys401, Cys404, Cys419, and Cys424 each contribute to the Zn(2+) site. In terms of domain architecture, BRCT spans 586-663 (KIDNRFLGKT…TEEDLKDMIK (78 aa)).

The protein belongs to the NAD-dependent DNA ligase family. LigA subfamily. Mg(2+) is required as a cofactor. The cofactor is Mn(2+).

It carries out the reaction NAD(+) + (deoxyribonucleotide)n-3'-hydroxyl + 5'-phospho-(deoxyribonucleotide)m = (deoxyribonucleotide)n+m + AMP + beta-nicotinamide D-nucleotide.. Its function is as follows. DNA ligase that catalyzes the formation of phosphodiester linkages between 5'-phosphoryl and 3'-hydroxyl groups in double-stranded DNA using NAD as a coenzyme and as the energy source for the reaction. It is essential for DNA replication and repair of damaged DNA. The sequence is that of DNA ligase from Clostridium kluyveri (strain NBRC 12016).